The following is a 131-amino-acid chain: Ribonuclease VapC4 (131 aa).

The region spanning Ile4–Lys106 is the PINc domain. Asp7 and Asp102 together coordinate Mg(2+).

It belongs to the PINc/VapC protein family. Mg(2+) is required as a cofactor.

Functionally, toxic component of a type II toxin-antitoxin (TA) system. An RNase. Its cognate antitoxin is VapB4. The polypeptide is Ribonuclease VapC4 (Methanocaldococcus jannaschii (strain ATCC 43067 / DSM 2661 / JAL-1 / JCM 10045 / NBRC 100440) (Methanococcus jannaschii)).